Reading from the N-terminus, the 918-residue chain is Eukaryotic translation initiation factor 3 subunit C (918 aa).

Positions 1-174 (MSRFFKGGSS…EEEGRRVVKS (174 aa)) are disordered. Phosphoserine is present on residues S10, S12, S16, S19, and S20. Composition is skewed to acidic residues over residues 36 to 47 (SSSEEESSEEES), 54 to 67 (ESSEEESESEESEV), and 79 to 128 (EDSE…ESDE). A Phosphothreonine modification is found at T667. In terms of domain architecture, PCI spans 681 to 856 (FHMHINLELL…GAIIFERVEI (176 aa)). The interval 879-918 (KLYEQKTQHTNPQENRRRDKGGSVKRRNERTENRNRSDMN) is disordered. Residues 907-918 (ERTENRNRSDMN) are compositionally biased toward basic and acidic residues.

This sequence belongs to the eIF-3 subunit C family. In terms of assembly, component of the eukaryotic translation initiation factor 3 (eIF-3) complex. The eIF-3 complex appears to include tif32/eif3a, SPAC25G10.08/eif3b, tif33/eif3c, SPBC4C3.07/eif3f, tif35/eif3g and sum1/eif3i. This set of common subunits may also associate exclusively with either moe1/eif3d and int6/eif3e, or with SPAC821.05/eif3h and SPAC1751.03/eif3m. The eIF-3 complex may also include SPAC3A12.13c/eif3j.

It is found in the cytoplasm. Component of the eukaryotic translation initiation factor 3 (eIF-3) complex, which is involved in protein synthesis of a specialized repertoire of mRNAs and, together with other initiation factors, stimulates binding of mRNA and methionyl-tRNAi to the 40S ribosome. The eIF-3 complex specifically targets and initiates translation of a subset of mRNAs involved in cell proliferation. In Schizosaccharomyces pombe (strain 972 / ATCC 24843) (Fission yeast), this protein is Eukaryotic translation initiation factor 3 subunit C (nip1).